The following is an 837-amino-acid chain: Anaphase-promoting complex subunit 4 (837 aa).

Low complexity-rich tracts occupy residues 59 to 81 (NDNN…NDNN) and 547 to 581 (SSSS…NNNN). Disordered stretches follow at residues 59 to 89 (NDNN…KSNK) and 547 to 588 (SSSS…QSGN).

Belongs to the APC4 family. In terms of assembly, the APC/C is composed of at least 13 subunits that stay tightly associated throughout the cell cycle: anapc1, anapc2, anapc3, anapc4, anapc5, anapc6, anapc7, anapc8, anapc10, anapc11, cdc20, cdc26 and cdh1.

It is found in the nucleus. It functions in the pathway protein modification; protein ubiquitination. Component of the anaphase promoting complex/cyclosome (APC/C), a cell cycle-regulated E3 ubiquitin-protein ligase complex that controls progression through mitosis and the G1 phase of the cell cycle. This chain is Anaphase-promoting complex subunit 4 (anapc4), found in Dictyostelium discoideum (Social amoeba).